Consider the following 298-residue polypeptide: Tryptophan 2,3-dioxygenase (298 aa).

Residues 51 to 55, Tyr113, and Arg117 each bind substrate; that span reads FIIQH. His240 serves as a coordination point for heme. Substrate is bound at residue Thr254.

Belongs to the tryptophan 2,3-dioxygenase family. Homotetramer. Heme serves as cofactor.

It carries out the reaction L-tryptophan + O2 = N-formyl-L-kynurenine. Its pathway is amino-acid degradation; L-tryptophan degradation via kynurenine pathway; L-kynurenine from L-tryptophan: step 1/2. Its function is as follows. Heme-dependent dioxygenase that catalyzes the oxidative cleavage of the L-tryptophan (L-Trp) pyrrole ring and converts L-tryptophan to N-formyl-L-kynurenine. Catalyzes the oxidative cleavage of the indole moiety. The polypeptide is Tryptophan 2,3-dioxygenase (Xanthomonas campestris pv. campestris (strain 8004)).